Reading from the N-terminus, the 432-residue chain is Polypyrimidine tract-binding protein homolog 3 (432 aa).

RRM domains are found at residues 6–80 (KVVH…FSSH), 98–187 (NRIL…YNND), 245–319 (CTVL…FSKH), and 355–429 (KMIH…FSQL).

The protein localises to the nucleus. In terms of biological role, plays a role in pre-mRNA splicing. Binds to the polypyrimidine tract of introns. May promote the binding of U2 snRNP to pre-mRNA. The polypeptide is Polypyrimidine tract-binding protein homolog 3 (Arabidopsis thaliana (Mouse-ear cress)).